The primary structure comprises 613 residues: Epsin-2 (613 aa).

Residues 11–143 form the ENTH domain; sequence NMMKGYSSTQ…NDEERLREER (133 aa). Disordered regions lie at residues 140–208, 323–351, and 356–375; these read REER…DDED, TAAN…PFSM, and RQKQ…EARQ. A compositionally biased stretch (basic residues) spans 148 to 167; that stretch reads RNRRANRAARPRPRRQRTRS. Threonine 165 carries the phosphothreonine modification. Position 167 is a phosphoserine (serine 167). 2 UIM domains span residues 175-194 and 206-225; these read SYQD…AQED and DEDP…EELK. The segment covering 179–188 has biased composition (basic and acidic residues); the sequence is DLEKALEESR. Positions 323–339 are enriched in low complexity; the sequence is TAANMQQQQQQPADFQQ. The segment covering 340–350 has biased composition (polar residues); that stretch reads PLPTGSNNPFS. A Glycyl lysine isopeptide (Lys-Gly) (interchain with G-Cter in ubiquitin) cross-link involves residue lysine 426. Threonine 430 is modified (phosphothreonine). Serine 434 is modified (phosphoserine). Threonine 450, threonine 468, and threonine 470 each carry phosphothreonine. Residues 471–512 are compositionally biased toward polar residues; it reads GTFINSQGTGYKQVTNEPKNNPFLSNQYTGLPSTNIVPTQTG. Positions 471 to 613 are disordered; the sequence is GTFINSQGTG…PDQGVSLIDL (143 aa). Positions 526 to 600 are enriched in low complexity; it reads SPQQNPTGIS…QQQQQQQQQQ (75 aa).

It belongs to the epsin family. Post-translationally, phosphorylated by PRK1.

The protein localises to the cytoplasm. Its subcellular location is the membrane. Functionally, binds to membranes enriched in phosphatidylinositol 3,5-bisphosphate (PtdIns(3,5)P2) and phosphatidylinositol 4,5-bisphosphate (PtdIns(4,5)P2). Required for endocytosis and localization of actin. The sequence is that of Epsin-2 (ENT2) from Saccharomyces cerevisiae (strain ATCC 204508 / S288c) (Baker's yeast).